We begin with the raw amino-acid sequence, 289 residues long: Pre-mRNA-splicing factor cwf23 (289 aa).

In terms of domain architecture, J spans 9–74 (DYYELLGINE…QLRKAYDSER (66 aa)). Over residues 129 to 148 (ESANLRRQRENRLREEQEQS) the composition is skewed to basic and acidic residues. 2 disordered regions span residues 129–161 (ESAN…SKIS) and 269–289 (KQKH…TMNA).

This sequence belongs to the DnaJ family. In terms of assembly, belongs to the 40S cdc5-associated complex (or cwf complex), a spliceosome sub-complex reminiscent of a late-stage spliceosome composed of the U2, U5 and U6 snRNAs and at least brr2, cdc5, cwf2/prp3, cwf3/syf1, cwf4/syf3, cwf5/ecm2, spp42/cwf6, cwf7/spf27, cwf8, cwf9, cwf10, cwf11, cwf12, prp45/cwf13, cwf14, cwf15, cwf16, cwf17, cwf18, cwf19, cwf20, cwf21, cwf22, cwf23, cwf24, cwf25, cwf26, cyp7/cwf27, cwf28, cwf29/ist3, lea1, msl1, prp5/cwf1, prp10, prp12/sap130, prp17, prp22, sap61, sap62, sap114, sap145, slu7, smb1, smd1, smd3, smf1, smg1 and syf2.

The protein resides in the cytoplasm. It localises to the nucleus. Involved in pre-mRNA splicing. May be involved in endoplasmic reticulum-associated protein degradation (ERAD) and required for growth at low and high temperatures. The polypeptide is Pre-mRNA-splicing factor cwf23 (cwf23) (Schizosaccharomyces pombe (strain 972 / ATCC 24843) (Fission yeast)).